The primary structure comprises 157 residues: Small ribosomal subunit protein uS7 (157 aa).

It belongs to the universal ribosomal protein uS7 family. In terms of assembly, part of the 30S ribosomal subunit. Contacts proteins S9 and S11.

In terms of biological role, one of the primary rRNA binding proteins, it binds directly to 16S rRNA where it nucleates assembly of the head domain of the 30S subunit. Is located at the subunit interface close to the decoding center, probably blocks exit of the E-site tRNA. In Akkermansia muciniphila (strain ATCC BAA-835 / DSM 22959 / JCM 33894 / BCRC 81048 / CCUG 64013 / CIP 107961 / Muc), this protein is Small ribosomal subunit protein uS7.